Here is a 439-residue protein sequence, read N- to C-terminus: Cytochrome b-c1 complex reductase subunit, mitochondrial (439 aa).

Residues 1 to 17 constitute a mitochondrion transit peptide; the sequence is MIRGSSALKSLTSRRLY.

Belongs to the peptidase M16 family. UQCRC1/QCR1 subfamily. In terms of assembly, component of the ubiquinol-cytochrome c oxidoreductase (cytochrome b-c1 complex, complex III, CIII), a multisubunit enzyme composed of 10 subunits. The complex is composed of 3 respiratory subunits cytochrome b (COB), cytochrome c1 (CYT1) and Rieske protein (RIP1), 2 core protein subunits COR1 and QCR2, and 5 low-molecular weight protein subunits QCR6, QCR7, QCR8, QCR9 and QCR10. The complex exists as an obligatory dimer and forms supercomplexes (SCs) in the inner mitochondrial membrane with a monomer or a dimer of cytochrome c oxidase (complex IV, CIV), resulting in 2 different assemblies (supercomplexes III(2)IV and III(2)IV(2)).

The protein resides in the mitochondrion inner membrane. Component of the ubiquinol-cytochrome c oxidoreductase, a multisubunit transmembrane complex that is part of the mitochondrial electron transport chain which drives oxidative phosphorylation. The complex plays an important role in the uptake of multiple carbon sources present in different host niches. The chain is Cytochrome b-c1 complex reductase subunit, mitochondrial from Candida albicans (strain SC5314 / ATCC MYA-2876) (Yeast).